Here is a 120-residue protein sequence, read N- to C-terminus: Large ribosomal subunit protein uL18 (120 aa).

Belongs to the universal ribosomal protein uL18 family. Part of the 50S ribosomal subunit; part of the 5S rRNA/L5/L18/L25 subcomplex. Contacts the 5S and 23S rRNAs.

Its function is as follows. This is one of the proteins that bind and probably mediate the attachment of the 5S RNA into the large ribosomal subunit, where it forms part of the central protuberance. The protein is Large ribosomal subunit protein uL18 of Clostridium botulinum (strain Eklund 17B / Type B).